The primary structure comprises 3919 residues: Intermembrane lipid transfer protein Vps13D (3919 aa).

Residues aspartate 4–leucine 114 form the Chorein N-terminal domain. The disordered stretch occupies residues threonine 706 to asparagine 736. One can recognise a UBA domain in the interval lysine 2292–glutamine 2334. One can recognise an SHR-BD domain in the interval glutamate 2837–glutamine 3113. Positions valine 3749–arginine 3768 are disordered. The span at glutamate 3751–lysine 3764 shows a compositional bias: basic and acidic residues.

This sequence belongs to the VPS13 family. In terms of tissue distribution, expressed in intestinal cells (at protein level).

Its subcellular location is the cytoplasm. It localises to the lysosome. Mediates the transfer of lipids between membranes at organelle contact sites. Functions in promoting mitochondrial clearance by mitochondrial autophagy (mitophagy), also possibly by positively regulating mitochondrial fission. Mitophagy plays an important role in regulating cell health and mitochondrial size and homeostasis. In Drosophila melanogaster (Fruit fly), this protein is Intermembrane lipid transfer protein Vps13D.